The chain runs to 635 residues: Extracellular metalloproteinase MEP (635 aa).

The N-terminal stretch at 1 to 19 is a signal peptide; the sequence is MRYSLSLALLGVAAVTVVA. The propeptide occupies 20–242; sequence HPHTPGRHGV…VHGVVDYVSH (223 aa). Position 428 (histidine 428) interacts with Zn(2+). Glutamate 429 is an active-site residue. Position 432 (histidine 432) interacts with Zn(2+). A glycan (N-linked (GlcNAc...) asparagine) is linked at asparagine 473.

This sequence belongs to the peptidase M36 family. Zn(2+) is required as a cofactor.

The protein resides in the secreted. Secreted metalloproteinase that allows assimilation of proteinaceous substrates. The sequence is that of Extracellular metalloproteinase MEP (MEP) from Pyricularia oryzae (strain 70-15 / ATCC MYA-4617 / FGSC 8958) (Rice blast fungus).